The primary structure comprises 400 residues: Formate-dependent phosphoribosylglycinamide formyltransferase (400 aa).

N(1)-(5-phospho-beta-D-ribosyl)glycinamide-binding positions include 22 to 23 (EL) and Glu82. ATP contacts are provided by residues Arg115, Lys157, 162-167 (SSGKGQ), 197-200 (EGFV), and Glu205. Positions 120–315 (RLAAETLGLP…EFELHARAIL (196 aa)) constitute an ATP-grasp domain. Mg(2+) contacts are provided by Glu274 and Glu286. Residues Asp293, Lys362, and 369–370 (RR) each bind N(1)-(5-phospho-beta-D-ribosyl)glycinamide.

It belongs to the PurK/PurT family. As to quaternary structure, homodimer.

The enzyme catalyses N(1)-(5-phospho-beta-D-ribosyl)glycinamide + formate + ATP = N(2)-formyl-N(1)-(5-phospho-beta-D-ribosyl)glycinamide + ADP + phosphate + H(+). It functions in the pathway purine metabolism; IMP biosynthesis via de novo pathway; N(2)-formyl-N(1)-(5-phospho-D-ribosyl)glycinamide from N(1)-(5-phospho-D-ribosyl)glycinamide (formate route): step 1/1. Its function is as follows. Involved in the de novo purine biosynthesis. Catalyzes the transfer of formate to 5-phospho-ribosyl-glycinamide (GAR), producing 5-phospho-ribosyl-N-formylglycinamide (FGAR). Formate is provided by PurU via hydrolysis of 10-formyl-tetrahydrofolate. This chain is Formate-dependent phosphoribosylglycinamide formyltransferase, found in Mycolicibacterium gilvum (strain PYR-GCK) (Mycobacterium gilvum (strain PYR-GCK)).